Reading from the N-terminus, the 1726-residue chain is Protein Shroom2 (1726 aa).

In terms of domain architecture, PDZ spans 79–159 (AGGCYSYWRG…ILKMIVKRRN (81 aa)). 4 disordered regions span residues 294 to 373 (DNTK…RSDS), 425 to 451 (RTVADTRRTSNSSYHAGLNADQGLSPY), 657 to 676 (FSQLDHSEKGSYRSSQDYSW), and 697 to 785 (EGRN…STYR). Positions 318–328 (VLQSTSINETS) are enriched in polar residues. Basic and acidic residues predominate over residues 329-338 (KIQRTEDNTE). Residues 657 to 667 (FSQLDHSEKGS) show a composition bias toward basic and acidic residues. Composition is skewed to polar residues over residues 746-755 (SKSTAALTES) and 769-785 (LESMSPTSEGSFSSTYR). One can recognise an ASD1 domain in the interval 788 to 877 (LQEAQARVLR…SEPEKINEVG (90 aa)). Disordered stretches follow at residues 913 to 968 (PKVP…DKVT), 1007 to 1080 (LDAD…QCGA), 1092 to 1120 (KWKPHDKSFPIPETSNESQQSRARSGTLP), 1166 to 1240 (FKKR…KNPS), 1269 to 1299 (SSKSHLQIPGMEPSRSPSPQFAPQKLTDKPP), and 1471 to 1499 (AQQRRKHLPKIPSPRSTDDKKDEQNVPSA). Residues 917–926 (PKVVSSSQSE) are compositionally biased toward low complexity. Basic and acidic residues predominate over residues 936-948 (DYAKSSEGQESKR). Composition is skewed to polar residues over residues 1054-1070 (NSNSTHCRSSTGDSPTR) and 1104-1119 (ETSNESQQSRARSGTL). A compositionally biased stretch (low complexity) spans 1191 to 1205 (SSSSLATSSESLLTA). Residues 1209–1235 (RAQSYSPSSQDTFPPQSLQKQSPSTYP) are compositionally biased toward polar residues. The 295-residue stretch at 1427 to 1721 (EELVREIVDK…QLKCLTDSLP (295 aa)) folds into the ASD2 domain.

It belongs to the shroom family. Interacts with F-actin.

It is found in the apical cell membrane. The protein resides in the cell junction. Its subcellular location is the tight junction. It localises to the cytoplasm. The protein localises to the cytoskeleton. Its function is as follows. May be involved in endothelial cell morphology changes during cell spreading. Required for eye pigmentation. In the retinal pigment epithelium, regulates the biogenesis of melanosomes and promotes their association with the apical cell surface by inducing gamma-tubulin redistribution. The chain is Protein Shroom2 (shroom2) from Xenopus tropicalis (Western clawed frog).